Here is a 93-residue protein sequence, read N- to C-terminus: MKKTLMLLAMVVALVILPFFINHGGEYGGSDGEAESQIQAIAPQYKPWFQPLYEPASGEIESLLFTLQGSLGAAVIFYILGYCKGKQRRDDRA.

2 consecutive transmembrane segments (helical) span residues 5 to 25 (LMLL…NHGG) and 63 to 83 (LLFT…LGYC).

It belongs to the CbiN family. In terms of assembly, forms an energy-coupling factor (ECF) transporter complex composed of an ATP-binding protein (A component, CbiO), a transmembrane protein (T component, CbiQ) and 2 possible substrate-capture proteins (S components, CbiM and CbiN) of unknown stoichimetry.

Its subcellular location is the cell inner membrane. It functions in the pathway cofactor biosynthesis; adenosylcobalamin biosynthesis. Its function is as follows. Part of the energy-coupling factor (ECF) transporter complex CbiMNOQ involved in cobalt import. In Salmonella agona (strain SL483), this protein is Cobalt transport protein CbiN.